A 286-amino-acid polypeptide reads, in one-letter code: Protein FAM87A (286 aa).

A run of 2 helical transmembrane segments spans residues 68–88 (YLHS…ETAL) and 161–181 (SFFV…GDML).

This sequence belongs to the FAM87 family.

The protein localises to the membrane. The chain is Protein FAM87A (FAM87A) from Homo sapiens (Human).